Consider the following 1388-residue polypeptide: Retrotransposon Gag-like protein 9 (1388 aa).

Disordered regions lie at residues 491 to 511 (ATASGKMSTPLRRAPTSGAMS), 769 to 790 (TPLMRTSDPGERPSLLTRASSS), 895 to 918 (GGVSSPLVRAPASGTMSTPLRRPS), 1100 to 1138 (TDSGEASTSHINITASGSKPTSHMTATTPETAKPPPKEV), and 1336 to 1388 (AMGN…HTNK). Positions 1103–1123 (GEASTSHINITASGSKPTSHM) are enriched in polar residues. Over residues 1359-1374 (YLKEHGDPQEGLHDHL) the composition is skewed to basic and acidic residues.

This Homo sapiens (Human) protein is Retrotransposon Gag-like protein 9.